The primary structure comprises 154 residues: Urease accessory protein UreE (154 aa).

Residues 135–154 (PENGAYHGTGGHHHHHHDHE) are disordered. Positions 144 to 154 (GGHHHHHHDHE) are enriched in basic residues.

The protein belongs to the UreE family.

Its subcellular location is the cytoplasm. Functionally, involved in urease metallocenter assembly. Binds nickel. Probably functions as a nickel donor during metallocenter assembly. In Teredinibacter turnerae (strain ATCC 39867 / T7901), this protein is Urease accessory protein UreE.